We begin with the raw amino-acid sequence, 446 residues long: N-succinylarginine dihydrolase (446 aa).

Substrate contacts are provided by residues Ala19–Ser28, Asn110, and His137–Arg138. Glu174 is a catalytic residue. Arg213 contacts substrate. His249 is a catalytic residue. Residues Asp251 and Asn364 each coordinate substrate. Cys370 serves as the catalytic Nucleophile.

The protein belongs to the succinylarginine dihydrolase family. In terms of assembly, homodimer.

It catalyses the reaction N(2)-succinyl-L-arginine + 2 H2O + 2 H(+) = N(2)-succinyl-L-ornithine + 2 NH4(+) + CO2. It functions in the pathway amino-acid degradation; L-arginine degradation via AST pathway; L-glutamate and succinate from L-arginine: step 2/5. Functionally, catalyzes the hydrolysis of N(2)-succinylarginine into N(2)-succinylornithine, ammonia and CO(2). The sequence is that of N-succinylarginine dihydrolase from Burkholderia ambifaria (strain ATCC BAA-244 / DSM 16087 / CCUG 44356 / LMG 19182 / AMMD) (Burkholderia cepacia (strain AMMD)).